The chain runs to 129 residues: CD59B glycoprotein (129 aa).

Positions 1 to 23 are cleaved as a signal peptide; the sequence is MRAQRGLILLLLLLAVFCSTAVS. The UPAR/Ly6 domain occupies 24–107; that stretch reads LKCYNCLDPV…GLEEPNNAET (84 aa). 5 cysteine pairs are disulfide-bonded: cysteine 26–cysteine 49, cysteine 29–cysteine 36, cysteine 42–cysteine 62, cysteine 68–cysteine 86, and cysteine 87–cysteine 92. Residue asparagine 39 is glycosylated (N-linked (GlcNAc...) asparagine). Asparagine 104 carries GPI-anchor amidated asparagine lipidation. The propeptide at 105-129 is removed in mature form; that stretch reads AETSSLRKTALLGTSVLVAILKFCF.

As to quaternary structure, interacts with T-cell surface antigen CD2. N- and O-glycosylated. In terms of tissue distribution, widely expressed in the kidneys, brain, lungs, spleen and testis Testis-specific.

It localises to the cell membrane. The protein localises to the secreted. In terms of biological role, potent inhibitor of the complement membrane attack complex (MAC) action, which protects self-cells from damage during complement activation. Acts by binding to the beta-haipins of C8 (C8A and C8B) components of the assembling MAC, forming an intermolecular beta-sheet that prevents incorporation of the multiple copies of C9 required for complete formation of the osmolytic pore. The polypeptide is CD59B glycoprotein (Mus musculus (Mouse)).